A 309-amino-acid polypeptide reads, in one-letter code: WD repeat domain phosphoinositide-interacting protein 4 (309 aa).

The WD 1 repeat unit spans residues 4–42; sequence QPLRGVTSLHFNQDQSCFCCAMETGVRIYNVEPLMEKGH. A L/FRRG motif motif is present at residues 180 to 183; sequence LRRG. The WD 2 repeat unit spans residues 184 to 223; that stretch reads TDPATLYCINFSHDSSFLCASSDKGTVHIFALKDTRLNRR.

The protein belongs to the WD repeat PROPPIN family. Interacts with WIPI1. Interacts with WIPI2. Interacts with ATG2A and ATG2B. Interacts with ULK1. May interact with the PRKAA1, PRKAA2, PRKAB1 and PRKAG1 subunits of the AMPK kinase. May interact with NUDC.

The protein localises to the preautophagosomal structure. Its subcellular location is the cytoplasm. In terms of biological role, component of the autophagy machinery that controls the major intracellular degradation process by which cytoplasmic materials are packaged into autophagosomes and delivered to lysosomes for degradation. Binds phosphatidylinositol 3-phosphate (PtdIns3P). Activated by the STK11/AMPK signaling pathway upon starvation, WDR45 is involved in autophagosome assembly downstream of WIPI2, regulating the size of forming autophagosomes. Together with WIPI1, promotes ATG2 (ATG2A or ATG2B)-mediated lipid transfer by enhancing ATG2-association with phosphatidylinositol 3-monophosphate (PI3P)-containing membranes. Probably recruited to membranes through its PtdIns3P activity. This Rattus norvegicus (Rat) protein is WD repeat domain phosphoinositide-interacting protein 4 (Wdr45).